Reading from the N-terminus, the 464-residue chain is Fumarate hydratase class II (464 aa).

Substrate-binding positions include S98–T100, H129–D132, S139–N141, and T187. H188 functions as the Proton donor/acceptor in the catalytic mechanism. S318 is a catalytic residue. Substrate is bound by residues S319 and K324–N326.

The protein belongs to the class-II fumarase/aspartase family. Fumarase subfamily. In terms of assembly, homotetramer.

It is found in the cytoplasm. It catalyses the reaction (S)-malate = fumarate + H2O. It participates in carbohydrate metabolism; tricarboxylic acid cycle; (S)-malate from fumarate: step 1/1. In terms of biological role, involved in the TCA cycle. Catalyzes the stereospecific interconversion of fumarate to L-malate. This chain is Fumarate hydratase class II, found in Pasteurella multocida (strain Pm70).